A 264-amino-acid polypeptide reads, in one-letter code: MKRKLTICLLIALIFYNGNAKAAERGSLEELNDLSDTVFQMTRQAKYEEALQVLEYFEKTLKSAEKKQQDPMLTGAQIRQITLGYNDMVRSLKQADTSDTQKLRAAAQFRMLMDAVDNRSDPLWGSLEKPIMEAFTELKRDVQKNGSTSFHEKWNEFISLYDLIYPSLTIDVSEDQLETVGKHIDVIEQEEFQQMTESTKLERLSLLQHDLKNVFDRVEEDDADPSLLWVIITTGSIIITALTYVGYRKYKAEKNKLKKRDYPK.

An N-terminal signal peptide occupies residues 1-22; it reads MKRKLTICLLIALIFYNGNAKA. Residues 227–247 form a helical membrane-spanning segment; it reads LLWVIITTGSIIITALTYVGY.

The protein localises to the membrane. This is an uncharacterized protein from Bacillus subtilis (strain 168).